We begin with the raw amino-acid sequence, 54 residues long: MPQLNLAWWLLNFFLGWTSLLVIFIILLNTSITNNTANTSTTTNTTPNLNWTWN.

The helical transmembrane segment at 8–28 (WWLLNFFLGWTSLLVIFIILL) threads the bilayer.

The protein belongs to the ATPase protein 8 family. F-type ATPases have 2 components, CF(1) - the catalytic core - and CF(0) - the membrane proton channel.

The protein resides in the mitochondrion membrane. Functionally, mitochondrial membrane ATP synthase (F(1)F(0) ATP synthase or Complex V) produces ATP from ADP in the presence of a proton gradient across the membrane which is generated by electron transport complexes of the respiratory chain. F-type ATPases consist of two structural domains, F(1) - containing the extramembraneous catalytic core and F(0) - containing the membrane proton channel, linked together by a central stalk and a peripheral stalk. During catalysis, ATP synthesis in the catalytic domain of F(1) is coupled via a rotary mechanism of the central stalk subunits to proton translocation. Part of the complex F(0) domain. Minor subunit located with subunit a in the membrane. The polypeptide is ATP synthase protein 8 (MT-ATP8) (Patiria pectinifera (Starfish)).